Consider the following 304-residue polypeptide: MPVAPIDFRNVEKRFGDKLVVNGLSFTVQAGECYGLLGPNGAGKTTTLKMLLGLTHPDAGTISLCGEPVPSRARHARQRVGVVPQFDNLDPDFTVRENLLVFGRYFGMSAQAAHALVKPLLEFAKLENKADAKVGELSGGMKRRLTLARALVNDPDVLVLDEPTTGLDPQARHLMWERLRSLLARGKTILITTHFMEEAERLCDRLCVIEEGRKIAEGAPHALIESEIGCDVIEIYGPDPATLRDELSAFAKHTEISGETLFCYVSDPEPLRARLKGRTGLRYLHRPANLEDVFLRLTGREMQD.

The 231-residue stretch at 6 to 236 (IDFRNVEKRF…EIGCDVIEIY (231 aa)) folds into the ABC transporter domain. 38 to 45 (GPNGAGKT) is an ATP binding site.

This sequence belongs to the ABC transporter superfamily. Lipooligosaccharide exporter (TC 3.A.1.102) family. As to quaternary structure, the complex is composed of two ATP-binding proteins (NodI) and two transmembrane proteins (NodJ).

The protein resides in the cell inner membrane. Part of the ABC transporter complex NodIJ involved in the export of the nodulation factors (Nod factors), the bacterial signal molecules that induce symbiosis and subsequent nodulation induction. Nod factors are LCO (lipo-chitin oligosaccharide), a modified beta-1,4-linked N-acetylglucosamine oligosaccharide. This subunit is responsible for energy coupling to the transport system. The chain is Nod factor export ATP-binding protein I from Burkholderia lata (strain ATCC 17760 / DSM 23089 / LMG 22485 / NCIMB 9086 / R18194 / 383).